A 232-amino-acid chain; its full sequence is MENIVNLKNIFVFYGKKKILNNISFKISHGKIITILGPNGSGKSTLARVILGLILPSHGKLIKHKKLRMSYVPQKIFFDINIPITVEKFMNLNSFFKKNNVHKFLQKVNAEHLLKKSIHNLSGGEIQKVLLARSLLNKPHLIVLDEPTQGLDINGQNILYDLITKIHGILSCSIIIISHDLHIVMAKTDEVICLNRSILCYGTPKKISDHPSFIEMFGCYNEKKRAIYKHNH.

The region spanning 5-220 (VNLKNIFVFY…PSFIEMFGCY (216 aa)) is the ABC transporter domain. 37–44 (GPNGSGKS) provides a ligand contact to ATP.

The protein belongs to the ABC transporter superfamily. Zinc importer (TC 3.A.1.15.5) family. As to quaternary structure, the complex is composed of two ATP-binding proteins (ZnuC), two transmembrane proteins (ZnuB) and a solute-binding protein (ZnuA).

The protein resides in the cell membrane. It catalyses the reaction Zn(2+)(out) + ATP(in) + H2O(in) = Zn(2+)(in) + ADP(in) + phosphate(in) + H(+)(in). Its function is as follows. Part of the ABC transporter complex ZnuABC involved in zinc import. Responsible for energy coupling to the transport system. This is Zinc import ATP-binding protein ZnuC from Wigglesworthia glossinidia brevipalpis.